The primary structure comprises 336 residues: F420-dependent glucose-6-phosphate dehydrogenase (336 aa).

Aspartate 39 serves as a coordination point for coenzyme F420-(gamma-Glu)n. Residue histidine 40 is the Proton donor of the active site. Coenzyme F420-(gamma-Glu)n is bound by residues threonine 76 and 107–108 (TG). Residue glutamate 109 is the Proton acceptor of the active site. Residues asparagine 112, 177–178 (GG), and 180–181 (LV) each bind coenzyme F420-(gamma-Glu)n. Residues threonine 195, lysine 198, lysine 259, and arginine 283 each contribute to the substrate site.

This sequence belongs to the F420-dependent glucose-6-phosphate dehydrogenase family. As to quaternary structure, homodimer.

It carries out the reaction oxidized coenzyme F420-(gamma-L-Glu)(n) + D-glucose 6-phosphate + H(+) = 6-phospho-D-glucono-1,5-lactone + reduced coenzyme F420-(gamma-L-Glu)(n). In terms of biological role, catalyzes the coenzyme F420-dependent oxidation of glucose 6-phosphate (G6P) to 6-phosphogluconolactone. The chain is F420-dependent glucose-6-phosphate dehydrogenase from Nocardia farcinica (strain IFM 10152).